The primary structure comprises 173 residues: NADH-ubiquinone oxidoreductase chain 6 (173 aa).

5 helical membrane passes run 1–21, 27–47, 48–68, 87–107, and 139–159; these read MTYFVLFLGLCFVLGGLAVAS, YGVVGLVLASVAGCGWLLSLG, VSFVSLVLFMVYLGGMLVVFV, VVGYGVGFVVVLVVGLVVGGF, and CGVGMFLVAGWGLLLTLFVVL.

The protein belongs to the complex I subunit 6 family.

It is found in the mitochondrion membrane. It carries out the reaction a ubiquinone + NADH + 5 H(+)(in) = a ubiquinol + NAD(+) + 4 H(+)(out). Its function is as follows. Core subunit of the mitochondrial membrane respiratory chain NADH dehydrogenase (Complex I) that is believed to belong to the minimal assembly required for catalysis. Complex I functions in the transfer of electrons from NADH to the respiratory chain. The immediate electron acceptor for the enzyme is believed to be ubiquinone. The chain is NADH-ubiquinone oxidoreductase chain 6 (MT-ND6) from Ptychoramphus aleuticus (Cassin's auklet).